The primary structure comprises 420 residues: G2/mitotic-specific cyclin-A (420 aa).

The tract at residues 64 to 93 (VQGSRIQPTRAAKEKLKPPQNISDSQLVND) is disordered. Over residues 83-93 (QNISDSQLVND) the composition is skewed to polar residues.

The protein belongs to the cyclin family. Cyclin AB subfamily.

In terms of biological role, essential for the control of the cell cycle at the G2/M (mitosis) transition. Interacts with the CDC2 and CDK2 protein kinases to form MPF. G2/M cyclins accumulate steadily during G2 and are abruptly destroyed at mitosis. The chain is G2/mitotic-specific cyclin-A from Hydra viridissima (Green hydra).